Consider the following 343-residue polypeptide: Glycerol-3-phosphate dehydrogenase [NAD(P)+] (343 aa).

NADPH is bound by residues W29, R49, and K122. Sn-glycerol 3-phosphate-binding residues include K122, G150, and S152. A154 is a binding site for NADPH. 5 residues coordinate sn-glycerol 3-phosphate: K205, D258, S268, R269, and N270. The active-site Proton acceptor is the K205. NADPH is bound at residue R269. Positions 288 and 290 each coordinate NADPH.

It belongs to the NAD-dependent glycerol-3-phosphate dehydrogenase family.

It is found in the cytoplasm. It carries out the reaction sn-glycerol 3-phosphate + NAD(+) = dihydroxyacetone phosphate + NADH + H(+). The catalysed reaction is sn-glycerol 3-phosphate + NADP(+) = dihydroxyacetone phosphate + NADPH + H(+). It participates in membrane lipid metabolism; glycerophospholipid metabolism. Functionally, catalyzes the reduction of the glycolytic intermediate dihydroxyacetone phosphate (DHAP) to sn-glycerol 3-phosphate (G3P), the key precursor for phospholipid synthesis. The protein is Glycerol-3-phosphate dehydrogenase [NAD(P)+] of Mesorhizobium japonicum (strain LMG 29417 / CECT 9101 / MAFF 303099) (Mesorhizobium loti (strain MAFF 303099)).